Reading from the N-terminus, the 308-residue chain is tRNA pseudouridine synthase B (308 aa).

The Nucleophile role is filled by Asp-48.

It belongs to the pseudouridine synthase TruB family. Type 1 subfamily.

It catalyses the reaction uridine(55) in tRNA = pseudouridine(55) in tRNA. Its function is as follows. Responsible for synthesis of pseudouridine from uracil-55 in the psi GC loop of transfer RNAs. In Histophilus somni (strain 129Pt) (Haemophilus somnus), this protein is tRNA pseudouridine synthase B.